The primary structure comprises 374 residues: Retron Eco8 reverse transcriptase (374 aa).

Residues 25 to 252 (ENIITQSAIP…KEISINGYVI (228 aa)) enclose the Reverse transcriptase domain. Residues D107, D200, and D201 each coordinate Mg(2+).

Belongs to the bacterial reverse transcriptase family.

It carries out the reaction DNA(n) + a 2'-deoxyribonucleoside 5'-triphosphate = DNA(n+1) + diphosphate. Functionally, reverse transcriptase (RT) component of antiviral defense system retron Eco8, composed of this RT, the following endonuclease and a non-coding RNA (ncRNA) encoded between them. Expression of retron Eco8 confers protection against bacteriophages T4, T6, T7 and SECphi4, SECphi6 and SECphi18. At multiplicity of infection (MOI) of 0.02 cultures slow growth when infected with SECphi4 but do not collapse, at MOI 2 cultures collapse. Responsible for synthesis of msDNA (a branched molecule with RNA linked by a 2',5'-phosphodiester bond to ssDNA). The retron transcript serves as primer (from a conserved internal G residue) and template for the reaction, and codes for the RT. The protein is Retron Eco8 reverse transcriptase of Escherichia coli.